Reading from the N-terminus, the 326-residue chain is HTH-type transcriptional regulator BlaA (326 aa).

One can recognise an HTH lysR-type domain in the interval Met-1 to Thr-59. A DNA-binding region (H-T-H motif) is located at residues Phe-19–Ala-38. A disordered region spans residues Thr-289–Cys-326. Residues Asp-295–Cys-326 show a composition bias toward low complexity.

This sequence belongs to the LysR transcriptional regulatory family.

Positive regulator of the expression of the gene (blaB) for beta-lactamase. It binds to the blaL-blaA intercistronic region. This Streptomyces cacaoi protein is HTH-type transcriptional regulator BlaA (blaA).